Consider the following 303-residue polypeptide: uncharacterized protein (303 aa).

Serine 63 is subject to Phosphoserine.

Belongs to the HAD-like hydrolase superfamily.

The protein localises to the cytoplasm. It localises to the nucleus. This is an uncharacterized protein from Schizosaccharomyces pombe (strain 972 / ATCC 24843) (Fission yeast).